A 519-amino-acid chain; its full sequence is Transcription factor STP1 (519 aa).

The interval 16-35 (IPGKIYAFFRELVSGVIISK) is i. A compositionally biased stretch (basic and acidic residues) spans 47–61 (ATKEEGKDAADEEKT). Disordered stretches follow at residues 47–69 (ATKEEGKDAADEEKTTTSLFPES) and 115–150 (LLGSRPEQDTGAPIKMSTGVTSSPLSPSGSTPEHST). Residues 65-97 (LFPESNNIDRSLNGGCSVIPCSMDVSDLNTPIS) are II. Over residues 131-146 (STGVTSSPLSPSGSTP) the composition is skewed to low complexity. The C2H2-type 1 zinc finger occupies 160 to 182 (FICHYCDATFRIRGYLTRHIKKH). The segment at 188 to 223 (YHCPFFNSATPPDLRCHNSGGFSRRDTYKTHLKARH) adopts a C2H2-type 2; atypical zinc-finger fold. Residues 240–265 (GHCAQCGEYFSTIENFVENHIESGDC) form a C2H2-type 3; atypical zinc finger. The interval 357-382 (IKKKQQQVSGSTVTTPEVATQNNQEV) is disordered. Residues 364–381 (VSGSTVTTPEVATQNNQE) show a composition bias toward polar residues.

Interacts (via Region II) with SSY5; protease component of the SPS-sensor. Phosphorylated by casein kinase I. Phosphorylation is not dependent on the extracellular amino acid levels, but is a prerequisite for proteolytic processing. Post-translationally, activated by the amino acid-induced proteolytic removal of an N-terminal inhibitory domain by serine protease SSY5, an intrinsic component of the SPS-sensor. Processing requires at least 2 components of the SCF(GRR1) ubiquitin ligase complex, namely the F-box protein GRR1 and the E2 enzyme CDC34, but does not depend on the proteasome. Processing is negatively regulated by the protein phosphatase 2A regulatory subunit RTS1.

The protein resides in the cell membrane. It is found in the nucleus. Its function is as follows. Transcription factor involved in the regulation of gene expression in response to extracellular amino acid levels. Synthesized as latent cytoplasmic precursor, which, upon a signal initiated by the plasma membrane SPS (SSY1-PTR3-SSY5) amino acid sensor system, becomes proteolytically activated and relocates to the nucleus, where it induces the expression of SPS-sensor-regulated genes, including the amino-acid permeases AGP1, BAP2, BAP3 and GNP1. Binding to promoters is facilitated by DAL81. Involved in the repression of genes subject to nitrogen catabolite repression and genes involved in stress response. Negatively regulated by inner nuclear membrane proteins ASI1, ASI2 and ASI3, which prevent unprocessed precursor forms that escape cytoplasmic anchoring from inducing SPS-sensor-regulated genes. May be involved in pre-tRNA splicing. This Saccharomyces cerevisiae (strain RM11-1a) (Baker's yeast) protein is Transcription factor STP1 (STP1).